We begin with the raw amino-acid sequence, 458 residues long: MKKTFNEFKDFIRNKEVAVVGIGISNIPLIHFLVKLGANVTAFDKKSEEALGEVAVEFKSKGIKLQLGENYLDNLEGFDVVFKTPSMRIDNPALVKAKESGAYITSEMEEFIKYCPAKIFGITGSDGKTTTTTLVYNILMTEGYKTWVGGNIGNPLFSNIEEMKEEDKVVLELSSFQLMTMKEEINCALVTNLSPNHLDIHKDMDEYVDAKKNIFKYQEVNDLLVLNRDNDITNSLVKEAKSRVMQFSRKEEIESGAYLNGDKLVLLGKEVCALEDIKLKGMHNVENLLAAFCLVSEDASIESMAKVATTFTGVEHRCEFVREIDGVKYYNDSIASSPTRTIAGLRAFEKPVILIAGGYDKHIPFEPLAEEGLDKIQALVLTGLTKNKIKDAFDKAMKDRGINIPIYMEDGFNEAIYRAKDIANEGDIITLSPACASFDMFPNFEVRGNKFKEIVNNL.

124-130 serves as a coordination point for ATP; that stretch reads GSDGKTT.

Belongs to the MurCDEF family.

It localises to the cytoplasm. The catalysed reaction is UDP-N-acetyl-alpha-D-muramoyl-L-alanine + D-glutamate + ATP = UDP-N-acetyl-alpha-D-muramoyl-L-alanyl-D-glutamate + ADP + phosphate + H(+). It participates in cell wall biogenesis; peptidoglycan biosynthesis. In terms of biological role, cell wall formation. Catalyzes the addition of glutamate to the nucleotide precursor UDP-N-acetylmuramoyl-L-alanine (UMA). The protein is UDP-N-acetylmuramoylalanine--D-glutamate ligase of Clostridium novyi (strain NT).